A 489-amino-acid polypeptide reads, in one-letter code: Betaine aldehyde dehydrogenase (489 aa).

2 residues coordinate K(+): Thr26 and Asp93. 150–152 (GAW) is a binding site for NAD(+). Lys162 (charge relay system) is an active-site residue. An NAD(+)-binding site is contributed by 176-179 (KPSE). Residue Ile180 coordinates K(+). Position 229 to 232 (229 to 232 (GVET)) interacts with NAD(+). Residue Leu245 coordinates K(+). Glu251 functions as the Proton acceptor in the catalytic mechanism. 3 residues coordinate NAD(+): Gly253, Cys285, and Glu386. The active-site Nucleophile is Cys285. Cysteine sulfenic acid (-SOH) is present on Cys285. K(+) contacts are provided by Lys456 and Gly459. The Charge relay system role is filled by Glu463.

This sequence belongs to the aldehyde dehydrogenase family. Dimer of dimers. The cofactor is K(+).

It carries out the reaction betaine aldehyde + NAD(+) + H2O = glycine betaine + NADH + 2 H(+). The protein operates within amine and polyamine biosynthesis; betaine biosynthesis via choline pathway; betaine from betaine aldehyde: step 1/1. Its function is as follows. Involved in the biosynthesis of the osmoprotectant glycine betaine. Catalyzes the irreversible oxidation of betaine aldehyde to the corresponding acid. This is Betaine aldehyde dehydrogenase from Paraburkholderia phytofirmans (strain DSM 17436 / LMG 22146 / PsJN) (Burkholderia phytofirmans).